The primary structure comprises 101 residues: Small ribosomal subunit protein bS16 (101 aa).

This sequence belongs to the bacterial ribosomal protein bS16 family.

The sequence is that of Small ribosomal subunit protein bS16 from Ureaplasma parvum serovar 3 (strain ATCC 700970).